A 90-amino-acid polypeptide reads, in one-letter code: uncharacterized protein (90 aa).

Residues 32-52 (IIINLIPLVLLFAFFCPCIYF) traverse the membrane as a helical segment.

Its subcellular location is the membrane. This is an uncharacterized protein from Schizosaccharomyces pombe (strain 972 / ATCC 24843) (Fission yeast).